Here is a 448-residue protein sequence, read N- to C-terminus: Glutamyl-tRNA reductase (448 aa).

Substrate contacts are provided by residues 49–52 (TCNR), S109, 114–116 (ETQ), and Q120. The active-site Nucleophile is the C50. 189-194 (GAGEMS) serves as a coordination point for NADP(+).

It belongs to the glutamyl-tRNA reductase family. In terms of assembly, homodimer.

The enzyme catalyses (S)-4-amino-5-oxopentanoate + tRNA(Glu) + NADP(+) = L-glutamyl-tRNA(Glu) + NADPH + H(+). It participates in porphyrin-containing compound metabolism; protoporphyrin-IX biosynthesis; 5-aminolevulinate from L-glutamyl-tRNA(Glu): step 1/2. In terms of biological role, catalyzes the NADPH-dependent reduction of glutamyl-tRNA(Glu) to glutamate 1-semialdehyde (GSA). In Staphylococcus aureus (strain MRSA252), this protein is Glutamyl-tRNA reductase.